We begin with the raw amino-acid sequence, 272 residues long: Glutamate racemase (272 aa).

Substrate is bound by residues D9 to S10 and Y41 to G42. C73 (proton donor/acceptor) is an active-site residue. N74 to T75 lines the substrate pocket. C183 functions as the Proton donor/acceptor in the catalytic mechanism. T184–H185 lines the substrate pocket.

This sequence belongs to the aspartate/glutamate racemases family.

The catalysed reaction is L-glutamate = D-glutamate. Its pathway is cell wall biogenesis; peptidoglycan biosynthesis. Functionally, provides the (R)-glutamate required for cell wall biosynthesis. This is Glutamate racemase from Shewanella sp. (strain MR-7).